Reading from the N-terminus, the 30-residue chain is Hementerin (30 aa).

Ca(2+) is required as a cofactor.

The protein localises to the secreted. With respect to regulation, fibrino(geno)lytic activity inhibited by EDTA but not by PMSF, E-64, 6-AHA and aprotinin. Functionally, cleaves fibrinogen Aalpha (FGA), gamma (FGG) and Bbeta (FGB) chains. Degrades cross-linked fibrin. Has no amidolytic, plasminogenolytic or caseinolytic activity. Inhibits platelet aggregation induced by collagen (IC(50)=7.5ug/ml) and various other agonists, presumably via activation of a nitridergic pathway. Inhibition is accompanied by reduced ATP release from and surface expression of SELP and CD63 on platelets as well as increased intracellular levels of Ca(2+), cGMP and nitric oxide synthase activity. The protein is Hementerin of Haementeria depressa (Leech).